A 206-amino-acid chain; its full sequence is LexA repressor (206 aa).

Residues 28 to 48 (VREICAAVGLSSTSTVHGHLT) constitute a DNA-binding region (H-T-H motif). Residues Ser127 and Lys165 each act as for autocatalytic cleavage activity in the active site.

Belongs to the peptidase S24 family. As to quaternary structure, homodimer.

It carries out the reaction Hydrolysis of Ala-|-Gly bond in repressor LexA.. Its function is as follows. Represses a number of genes involved in the response to DNA damage (SOS response), including recA and lexA. In the presence of single-stranded DNA, RecA interacts with LexA causing an autocatalytic cleavage which disrupts the DNA-binding part of LexA, leading to derepression of the SOS regulon and eventually DNA repair. This Lactobacillus delbrueckii subsp. bulgaricus (strain ATCC 11842 / DSM 20081 / BCRC 10696 / JCM 1002 / NBRC 13953 / NCIMB 11778 / NCTC 12712 / WDCM 00102 / Lb 14) protein is LexA repressor.